We begin with the raw amino-acid sequence, 1071 residues long: DNA-directed RNA polymerase subunit beta (1071 aa).

Belongs to the RNA polymerase beta chain family. In plastids the minimal PEP RNA polymerase catalytic core is composed of four subunits: alpha, beta, beta', and beta''. When a (nuclear-encoded) sigma factor is associated with the core the holoenzyme is formed, which can initiate transcription.

The protein resides in the plastid. It localises to the chloroplast. The enzyme catalyses RNA(n) + a ribonucleoside 5'-triphosphate = RNA(n+1) + diphosphate. Functionally, DNA-dependent RNA polymerase catalyzes the transcription of DNA into RNA using the four ribonucleoside triphosphates as substrates. This Acorus gramineus (Dwarf sweet flag) protein is DNA-directed RNA polymerase subunit beta.